We begin with the raw amino-acid sequence, 89 residues long: uncharacterized protein (89 aa).

Transmembrane regions (helical) follow at residues 11–31 (IFGA…PIAL) and 63–83 (AAIS…TVVF).

It localises to the cell membrane. This is an uncharacterized protein from Methanocaldococcus jannaschii (strain ATCC 43067 / DSM 2661 / JAL-1 / JCM 10045 / NBRC 100440) (Methanococcus jannaschii).